The sequence spans 314 residues: Methionyl-tRNA formyltransferase (314 aa).

110 to 113 contributes to the (6S)-5,6,7,8-tetrahydrofolate binding site; sequence SLLP.

The protein belongs to the Fmt family.

The catalysed reaction is L-methionyl-tRNA(fMet) + (6R)-10-formyltetrahydrofolate = N-formyl-L-methionyl-tRNA(fMet) + (6S)-5,6,7,8-tetrahydrofolate + H(+). Attaches a formyl group to the free amino group of methionyl-tRNA(fMet). The formyl group appears to play a dual role in the initiator identity of N-formylmethionyl-tRNA by promoting its recognition by IF2 and preventing the misappropriation of this tRNA by the elongation apparatus. The protein is Methionyl-tRNA formyltransferase of Bacillus cereus (strain G9842).